The sequence spans 173 residues: Lipoprotein signal peptidase (173 aa).

The next 4 helical transmembrane spans lie at 24–44, 55–75, 80–100, and 105–125; these read PWLGLGVIWILLDQLTKIAIL, ITGFFNLVLAYNRGAAFSFLA, WQRWFFTGLGVAAALFIVWLL, and GQKLFCFALALILGGALGNVI. Active-site residues include D135 and D153. Residues 145–165 form a helical membrane-spanning segment; that stretch reads HWPAFNVADCGICIGAVLLII.

This sequence belongs to the peptidase A8 family.

The protein resides in the cell inner membrane. It catalyses the reaction Release of signal peptides from bacterial membrane prolipoproteins. Hydrolyzes -Xaa-Yaa-Zaa-|-(S,diacylglyceryl)Cys-, in which Xaa is hydrophobic (preferably Leu), and Yaa (Ala or Ser) and Zaa (Gly or Ala) have small, neutral side chains.. The protein operates within protein modification; lipoprotein biosynthesis (signal peptide cleavage). Functionally, this protein specifically catalyzes the removal of signal peptides from prolipoproteins. This is Lipoprotein signal peptidase from Ralstonia nicotianae (strain ATCC BAA-1114 / GMI1000) (Ralstonia solanacearum).